A 254-amino-acid chain; its full sequence is MTQAFTVVIPARYASTRLPGKPLQDIAGQPMIQRVWNQARKSAASRVVVATDDERILAACQGFGAEALLTRAEHNSGTDRLEEVASRLGLASDAIVVNVQGDEPLIPPALIDQVAANLAAHPEAAIATLAEPIHEVSALFNPNVVKVATDIDGLALTFSRAPLPWARDAFARDRDSLPEGVPYRRHIGIYAYRVGFLADFVAWGPCWLENAESLEQLRALWHGVRIHVADARETMLPGVDTPEDLERVRRVLGG.

It belongs to the KdsB family.

It is found in the cytoplasm. The catalysed reaction is 3-deoxy-alpha-D-manno-oct-2-ulosonate + CTP = CMP-3-deoxy-beta-D-manno-octulosonate + diphosphate. It participates in nucleotide-sugar biosynthesis; CMP-3-deoxy-D-manno-octulosonate biosynthesis; CMP-3-deoxy-D-manno-octulosonate from 3-deoxy-D-manno-octulosonate and CTP: step 1/1. The protein operates within bacterial outer membrane biogenesis; lipopolysaccharide biosynthesis. Its function is as follows. Activates KDO (a required 8-carbon sugar) for incorporation into bacterial lipopolysaccharide in Gram-negative bacteria. The sequence is that of 3-deoxy-manno-octulosonate cytidylyltransferase from Pseudomonas aeruginosa (strain LESB58).